The sequence spans 103 residues: Integration host factor subunit beta (103 aa).

Residues arginine 59–proline 82 form a disordered region.

This sequence belongs to the bacterial histone-like protein family. In terms of assembly, heterodimer of an alpha and a beta chain.

In terms of biological role, this protein is one of the two subunits of integration host factor, a specific DNA-binding protein that functions in genetic recombination as well as in transcriptional and translational control. The protein is Integration host factor subunit beta of Xanthomonas oryzae pv. oryzae (strain MAFF 311018).